The sequence spans 362 residues: Ribosome-binding ATPase YchF (362 aa).

The 253-residue stretch at 3–255 (FKCGIIGLPN…MSDEEKKSFM (253 aa)) folds into the OBG-type G domain. 12–17 (NVGKST) is a binding site for ATP. Positions 16 and 36 each coordinate Mg(2+). Residues 277–360 (NLITFFTVGD…QDGDIIHFLF (84 aa)) form the TGS domain.

Belongs to the TRAFAC class OBG-HflX-like GTPase superfamily. OBG GTPase family. YchF/OLA1 subfamily. Mg(2+) serves as cofactor.

Functionally, ATPase that binds to both the 70S ribosome and the 50S ribosomal subunit in a nucleotide-independent manner. This Buchnera aphidicola subsp. Acyrthosiphon pisum (strain APS) (Acyrthosiphon pisum symbiotic bacterium) protein is Ribosome-binding ATPase YchF.